Reading from the N-terminus, the 276-residue chain is Large ribosomal subunit protein uL2 (276 aa).

Positions 219–276 (TVRGSVMNPNDHPHGGGEGRAPIGRKSPMSPWGKPTLGYKTRQRNKPSDKYIVRKRKK) are disordered.

Belongs to the universal ribosomal protein uL2 family. In terms of assembly, part of the 50S ribosomal subunit. Forms a bridge to the 30S subunit in the 70S ribosome.

One of the primary rRNA binding proteins. Required for association of the 30S and 50S subunits to form the 70S ribosome, for tRNA binding and peptide bond formation. It has been suggested to have peptidyltransferase activity; this is somewhat controversial. Makes several contacts with the 16S rRNA in the 70S ribosome. The protein is Large ribosomal subunit protein uL2 of Oceanobacillus iheyensis (strain DSM 14371 / CIP 107618 / JCM 11309 / KCTC 3954 / HTE831).